We begin with the raw amino-acid sequence, 482 residues long: Probable F-box protein At1g30780 (482 aa).

In terms of domain architecture, F-box spans 230-280; the sequence is EIDLDSLPFDLKMVILTRLSAKSLTNFKRVSKMWSSIIGSQRFIDSFFTMS.

The protein is Probable F-box protein At1g30780 of Arabidopsis thaliana (Mouse-ear cress).